The following is a 102-amino-acid chain: Inner membrane protein YaiY (102 aa).

Over 1–24 (MADFTLSKSLFSGKYRNASSTPGN) the chain is Cytoplasmic. The chain crosses the membrane as a helical span at residues 25–45 (IAYALFVLFCFWAGAQLLNLL). At 46–74 (VHAPGVYERLMQVQETGRPRVEIGLGVGT) the chain is on the periplasmic side. The chain crosses the membrane as a helical span at residues 75-95 (IFGLIPFLVGCLIFAVVALWL). The Cytoplasmic segment spans residues 96–102 (HWRHRRQ).

The protein resides in the cell inner membrane. This is Inner membrane protein YaiY (yaiY) from Escherichia coli O157:H7.